The following is a 115-amino-acid chain: Transcription and mRNA export factor ENY2 (115 aa).

Belongs to the ENY2 family. In terms of assembly, component of a deubiquitination module (DUB module) formed by ENY2, SGF11, and UBP22 in Arabidopsis. Interacts directly with SGF11, but not with UBP22. Interacts with MOS4. In terms of tissue distribution, expressed in roots, cotyledons, leaves and upper part of sepals.

Its subcellular location is the nucleus. It is found in the nucleoplasm. Its function is as follows. Component of a deubiquitination module (DUB module) that specifically deubiquinates monoubiquinated histone H2B (H2Bub). Does not seem to be a component of the TREX-2 complex. Seems to act independently of the SAGA multiprotein complex. The DUB module is responsible for the major H2Bub deubiquitinase activity in Arabidopsis. This Arabidopsis thaliana (Mouse-ear cress) protein is Transcription and mRNA export factor ENY2.